A 767-amino-acid chain; its full sequence is Syn-copalyl diphosphate synthase (767 aa).

The disordered stretch occupies residues 45–74 (GPMLISKSPPYPASEETREWEAEGQHEHTD). The span at 59–74 (EETREWEAEGQHEHTD) shows a compositional bias: basic and acidic residues. Substrate is bound at residue Lys233. Positions 365 and 367 each coordinate Mg(2+). The DXDD motif motif lies at 365–368 (DIDD). Lys453 contributes to the substrate binding site.

It depends on Mg(2+) as a cofactor.

The enzyme catalyses (2E,6E,10E)-geranylgeranyl diphosphate = 9alpha-copalyl diphosphate. Catalyzes the conversion of geranylgeranyl diphosphate to the phytoalexin precursor syn-copalyl diphosphate. This Oryza sativa subsp. indica (Rice) protein is Syn-copalyl diphosphate synthase (CPS4).